The chain runs to 465 residues: UDP-N-acetylmuramoylalanine--D-glutamate ligase (465 aa).

Residue 127-133 (GSNGKST) participates in ATP binding.

Belongs to the MurCDEF family.

The protein resides in the cytoplasm. The enzyme catalyses UDP-N-acetyl-alpha-D-muramoyl-L-alanine + D-glutamate + ATP = UDP-N-acetyl-alpha-D-muramoyl-L-alanyl-D-glutamate + ADP + phosphate + H(+). It participates in cell wall biogenesis; peptidoglycan biosynthesis. Functionally, cell wall formation. Catalyzes the addition of glutamate to the nucleotide precursor UDP-N-acetylmuramoyl-L-alanine (UMA). The polypeptide is UDP-N-acetylmuramoylalanine--D-glutamate ligase (Cereibacter sphaeroides (strain ATCC 17025 / ATH 2.4.3) (Rhodobacter sphaeroides)).